A 159-amino-acid polypeptide reads, in one-letter code: 3-dehydroquinate dehydratase (159 aa).

Residue Tyr-22 is the Proton acceptor of the active site. 3 residues coordinate substrate: Asn-73, His-79, and Asp-86. Residue His-99 is the Proton donor of the active site. Substrate is bound by residues 100–101 and Arg-110; that span reads IS.

The protein belongs to the type-II 3-dehydroquinase family. Homododecamer.

The enzyme catalyses 3-dehydroquinate = 3-dehydroshikimate + H2O. It functions in the pathway metabolic intermediate biosynthesis; chorismate biosynthesis; chorismate from D-erythrose 4-phosphate and phosphoenolpyruvate: step 3/7. Its function is as follows. Catalyzes a trans-dehydration via an enolate intermediate. The polypeptide is 3-dehydroquinate dehydratase (Campylobacter jejuni subsp. jejuni serotype O:6 (strain 81116 / NCTC 11828)).